The primary structure comprises 431 residues: Serine hydroxymethyltransferase 2 (431 aa).

(6S)-5,6,7,8-tetrahydrofolate contacts are provided by residues Leu-131 and 135-137 (GHL). Lys-240 is modified (N6-(pyridoxal phosphate)lysine).

The protein belongs to the SHMT family. In terms of assembly, homodimer. Requires pyridoxal 5'-phosphate as cofactor.

It is found in the cytoplasm. The enzyme catalyses (6R)-5,10-methylene-5,6,7,8-tetrahydrofolate + glycine + H2O = (6S)-5,6,7,8-tetrahydrofolate + L-serine. Its pathway is one-carbon metabolism; tetrahydrofolate interconversion. The protein operates within amino-acid biosynthesis; glycine biosynthesis; glycine from L-serine: step 1/1. Functionally, catalyzes the reversible interconversion of serine and glycine with tetrahydrofolate (THF) serving as the one-carbon carrier. This reaction serves as the major source of one-carbon groups required for the biosynthesis of purines, thymidylate, methionine, and other important biomolecules. Also exhibits THF-independent aldolase activity toward beta-hydroxyamino acids, producing glycine and aldehydes, via a retro-aldol mechanism. This is Serine hydroxymethyltransferase 2 from Vibrio parahaemolyticus serotype O3:K6 (strain RIMD 2210633).